The primary structure comprises 346 residues: Hydroxycarboxylic acid receptor 1 (346 aa).

At 1 to 21 the chain is on the extracellular side; the sequence is MYNGSCCRIEGDTISQVMPPL. N-linked (GlcNAc...) asparagine glycosylation is present at N3. Residues 22–42 traverse the membrane as a helical segment; the sequence is LIVAFVLGALGNGVALCGFCF. The Cytoplasmic portion of the chain corresponds to 43–49; sequence HMKTWKP. Residues 50–70 traverse the membrane as a helical segment; that stretch reads STVYLFNLAVADFLLMICLPF. The Extracellular segment spans residues 71-89; sequence RTDYYLRRRHWAFGDIPCR. The cysteines at positions 88 and 165 are disulfide-linked. Residues 90–110 form a helical membrane-spanning segment; sequence VGLFTLAMNRAGSIVFLTVVA. The Cytoplasmic segment spans residues 111 to 130; the sequence is ADRYFKVVHPHHAVNTISTR. A helical transmembrane segment spans residues 131 to 151; it reads VAAGIVCTLWALVILGTVYLL. Residues 152–182 are Extracellular-facing; sequence LENHLCVQETAVSCESFIMESANGWHDIMFQ. A helical transmembrane segment spans residues 183–203; it reads LEFFMPLGIILFCSFKIVWSL. Over 204 to 220 the chain is Cytoplasmic; the sequence is RRRQQLARQARMKKATR. A helical membrane pass occupies residues 221–241; sequence FIMVVAIVFITCYLPSVSARL. The Extracellular segment spans residues 242–261; sequence YFLWTVPSSACDPSVHGALH. Residues 262 to 281 form a helical membrane-spanning segment; that stretch reads ITLSFTYMNSMLDPLVYYFS. The Cytoplasmic segment spans residues 282–346; that stretch reads SPSFPKFYNK…QWDPHIVEWH (65 aa).

It belongs to the G-protein coupled receptor 1 family. Expressed abundantly in brown and white fat. It also detectable at lower levels in liver, kidney, skeletal muscle, brain and pituitary. Not detected in frontal, temporal and occipital lobes of the cortex, basal forebrain, caudate nucleus, nucleus accumbens and hippocampus.

Its subcellular location is the cell membrane. In terms of biological role, acts as a receptor for L-lactate and mediates its anti-lipolytic effect through a G(i)-protein-mediated pathway. In Homo sapiens (Human), this protein is Hydroxycarboxylic acid receptor 1 (HCAR1).